Here is a 211-residue protein sequence, read N- to C-terminus: Glutathione S-transferase class-mu 28 kDa isozyme (211 aa).

The region spanning 4–86 (DHIKVIYFNG…YMAKKHHMMG (83 aa)) is the GST N-terminal domain. The glutathione site is built by Y10, R16, W41, K45, L53, E70, S71, and D104. The GST C-terminal domain occupies 88–211 (TDEEYYNVEK…YLSDRAATPF (124 aa)).

This sequence belongs to the GST superfamily. Mu family. As to quaternary structure, homodimer.

It catalyses the reaction RX + glutathione = an S-substituted glutathione + a halide anion + H(+). Its function is as follows. Conjugation of reduced glutathione to a wide number of exogenous and endogenous hydrophobic electrophiles. Functionally, GST isoenzymes appear to play a central role in the parasite detoxification system. Other functions are also suspected including a role in increasing the solubility of haematin in the parasite gut. The protein is Glutathione S-transferase class-mu 28 kDa isozyme of Schistosoma bovis (Blood fluke).